The primary structure comprises 466 residues: uncharacterized protein (466 aa).

The tract at residues Met1–Lys22 is disordered. Positions Arg7–Tyr19 are enriched in polar residues. A phosphoserine mark is found at Ser40 and Ser42. Residues Tyr108 to His183 form the RRM domain. The disordered stretch occupies residues Arg186–Asp207. The span at Pro188–Asp207 shows a compositional bias: basic and acidic residues. The CID domain maps to Leu209 to Thr368. Ser371 is subject to Phosphoserine. Positions Ser425 to Pro436 are enriched in low complexity. Residues Ser425–Phe448 are disordered.

It is found in the nucleus. The protein resides in the cytoplasm. This is an uncharacterized protein from Schizosaccharomyces pombe (strain 972 / ATCC 24843) (Fission yeast).